Consider the following 318-residue polypeptide: N-acyl-aromatic-L-amino acid amidohydrolase (carboxylate-forming) (318 aa).

Residues 1–210 are hydrolytic domain; the sequence is MSSLPGSREP…ILDFIELFNQ (210 aa). Histidine 21 and glutamate 24 together coordinate Zn(2+). Residues arginine 63 and 70–71 each bind substrate; that span reads NR. Residue histidine 116 participates in Zn(2+) binding. Substrate is bound by residues glutamate 177 and tyrosine 287. Residues 211-318 form a shielding domain region; that stretch reads GMDLPAFEMD…RLTPRSTQTP (108 aa). Position 317 is a phosphothreonine (threonine 317).

The protein belongs to the AspA/AstE family. Aspartoacylase subfamily. Exists as a mixture of homodimers and homotetramer, both catalytically active. It depends on Zn(2+) as a cofactor. As to expression, expressed predominantly in kidney and to a lesser extent in liver. Weakly expressed in heart, small intestine, brain, lung, testis, and stomach.

The protein resides in the apical cell membrane. It is found in the cytoplasm. It catalyses the reaction an N-acyl-aromatic L-alpha-amino acid + H2O = an aromatic L-alpha-amino acid + a carboxylate. The enzyme catalyses an N-acetyl-L-cysteine-S-conjugate + H2O = an S-substituted L-cysteine + acetate. Plays an important role in deacetylating mercapturic acids in kidney proximal tubules. Also acts on N-acetyl-aromatic amino acids. This Mus musculus (Mouse) protein is N-acyl-aromatic-L-amino acid amidohydrolase (carboxylate-forming) (Acy3).